Consider the following 298-residue polypeptide: ADP/ATP translocase 3 (298 aa).

Methionine 1 is modified (N-acetylmethionine). Residues 1 to 7 (MTEQAIS) are Mitochondrial intermembrane-facing. The residue at position 2 (threonine 2) is an N-acetylthreonine; in ADP/ATP translocase 3, N-terminally processed. A Solcar 1 repeat occupies 6–98 (ISFAKDFLAG…FAFKDKYKQI (93 aa)). Residues 8-37 (FAKDFLAGGIAAAISKTAVAPIERVKLLLQ) form a helical membrane-spanning segment. Topologically, residues 38–74 (VQHASKQIAADKQYKGIVDCIVRIPKEQGVLSFWRGN) are mitochondrial matrix. Lysine 52 is modified (N6,N6,N6-trimethyllysine). Residues 75-99 (LANVIRYFPTQALNFAFKDKYKQIF) form a helical membrane-spanning segment. The ADP site is built by arginine 80 and lysine 92. The Mitochondrial intermembrane segment spans residues 100-109 (LGGVDKHTQF). Lysine 105 carries the N6-acetyllysine modification. Residues 110–130 (WRYFAGNLASGGAAGATSLCF) form a helical membrane-spanning segment. Solcar repeat units follow at residues 111–201 (RYFA…AKGM) and 212–297 (VSWM…LKKV). Topologically, residues 131–178 (VYPLDFARTRLAADVGKSATEREFKGLGDCLVKITKSDGIRGLYQGFN) are mitochondrial matrix. Residues 179–199 (VSVQGIIIYRAAYFGVYGTAK) form a helical membrane-spanning segment. Residues 200 to 210 (GMLPDPRNTHI) lie on the Mitochondrial intermembrane side of the membrane. Residues 211–231 (VVSWMIAQTVTAVAGVFSYPF) form a helical membrane-spanning segment. Topologically, residues 232 to 273 (DTVRRRMMMQSGRKGADIMYKGTLDCWRKIFKDEGGKAFFKG) are mitochondrial matrix. An ADP-binding site is contributed by arginine 235. The tract at residues 235–240 (RRRMMM) is important for transport activity. A Nucleotide carrier signature motif motif is present at residues 235–240 (RRRMMM). At lysine 268 the chain carries N6-acetyllysine. The helical transmembrane segment at 274–291 (AWSNVLRGMGGAFVLVLY) threads the bilayer. Residues 292 to 298 (DELKKVI) lie on the Mitochondrial intermembrane side of the membrane.

It belongs to the mitochondrial carrier (TC 2.A.29) family. In terms of assembly, monomer. Found in a complex with ARL2, ARL2BP and SLC25A6/ANT3. Trimethylated by ANTKMT at Lys-52.

Its subcellular location is the mitochondrion inner membrane. It localises to the membrane. It carries out the reaction ADP(in) + ATP(out) = ADP(out) + ATP(in). It catalyses the reaction H(+)(in) = H(+)(out). With respect to regulation, the matrix-open state (m-state) is inhibited by the membrane-permeable bongkrekic acid (BKA). The cytoplasmic-open state (c-state) is inhibited by the membrane-impermeable toxic inhibitor carboxyatractyloside (CATR). Proton transporter activity is inhibited by ADP:ATP antiporter activity. Functionally, ADP:ATP antiporter that mediates import of ADP into the mitochondrial matrix for ATP synthesis, and export of ATP out to fuel the cell. Cycles between the cytoplasmic-open state (c-state) and the matrix-open state (m-state): operates by the alternating access mechanism with a single substrate-binding site intermittently exposed to either the cytosolic (c-state) or matrix (m-state) side of the inner mitochondrial membrane. In addition to its ADP:ATP antiporter activity, also involved in mitochondrial uncoupling and mitochondrial permeability transition pore (mPTP) activity. Plays a role in mitochondrial uncoupling by acting as a proton transporter: proton transport uncouples the proton flows via the electron transport chain and ATP synthase to reduce the efficiency of ATP production and cause mitochondrial thermogenesis. Proton transporter activity is inhibited by ADP:ATP antiporter activity, suggesting that SLC25A6/ANT3 acts as a master regulator of mitochondrial energy output by maintaining a delicate balance between ATP production (ADP:ATP antiporter activity) and thermogenesis (proton transporter activity). Proton transporter activity requires free fatty acids as cofactor, but does not transport it. Also plays a key role in mPTP opening, a non-specific pore that enables free passage of the mitochondrial membranes to solutes of up to 1.5 kDa, and which contributes to cell death. It is however unclear if SLC25A6/ANT3 constitutes a pore-forming component of mPTP or regulates it. The polypeptide is ADP/ATP translocase 3 (Sus scrofa (Pig)).